The following is a 336-amino-acid chain: tRNA-cytidine(32) 2-sulfurtransferase (336 aa).

The interval 1–34 (MNAPEILNGAATASPADATEATQTAARAKTPLTR) is disordered. Residues 10-22 (AATASPADATEAT) show a composition bias toward low complexity. Residues 75–80 (SGGKDS) carry the PP-loop motif motif. Residues Cys150, Cys153, and Cys241 each contribute to the [4Fe-4S] cluster site.

Belongs to the TtcA family. As to quaternary structure, homodimer. Requires Mg(2+) as cofactor. The cofactor is [4Fe-4S] cluster.

It localises to the cytoplasm. It catalyses the reaction cytidine(32) in tRNA + S-sulfanyl-L-cysteinyl-[cysteine desulfurase] + AH2 + ATP = 2-thiocytidine(32) in tRNA + L-cysteinyl-[cysteine desulfurase] + A + AMP + diphosphate + H(+). Its pathway is tRNA modification. Catalyzes the ATP-dependent 2-thiolation of cytidine in position 32 of tRNA, to form 2-thiocytidine (s(2)C32). The sulfur atoms are provided by the cysteine/cysteine desulfurase (IscS) system. The chain is tRNA-cytidine(32) 2-sulfurtransferase from Paraburkholderia phytofirmans (strain DSM 17436 / LMG 22146 / PsJN) (Burkholderia phytofirmans).